Consider the following 126-residue polypeptide: Small ribosomal subunit protein eS6 (126 aa).

This sequence belongs to the eukaryotic ribosomal protein eS6 family.

The polypeptide is Small ribosomal subunit protein eS6 (Nanoarchaeum equitans (strain Kin4-M)).